Consider the following 239-residue polypeptide: UPF0502 protein Bcen_5249 (239 aa).

The tract at residues 196–239 (IRGAKGRTEAPRGRSGATQCAGSTDGERTRHRRRRTGRRVLIAS) is disordered. Residues 224–233 (TRHRRRRTGR) show a composition bias toward basic residues.

Belongs to the UPF0502 family.

In Burkholderia orbicola (strain AU 1054), this protein is UPF0502 protein Bcen_5249.